Here is a 33-residue protein sequence, read N- to C-terminus: Brevinin-2LT (33 aa).

Cysteines 27 and 33 form a disulfide.

Expressed by the skin glands.

Its subcellular location is the secreted. Functionally, has antibacterial activity. The protein is Brevinin-2LT of Rana latastei (Italian agile frog).